Here is a 444-residue protein sequence, read N- to C-terminus: UDP-N-acetylmuramate--L-alanine ligase (444 aa).

Residue 110–116 coordinates ATP; sequence GAHGKTS.

It belongs to the MurCDEF family.

It is found in the cytoplasm. It carries out the reaction UDP-N-acetyl-alpha-D-muramate + L-alanine + ATP = UDP-N-acetyl-alpha-D-muramoyl-L-alanine + ADP + phosphate + H(+). Its pathway is cell wall biogenesis; peptidoglycan biosynthesis. Cell wall formation. This chain is UDP-N-acetylmuramate--L-alanine ligase, found in Streptococcus pneumoniae (strain CGSP14).